A 123-amino-acid chain; its full sequence is Small ribosomal subunit protein uS13 (123 aa).

Positions 93–123 are disordered; it reads RRNLPVRGQKTKTNARTRKGPKRAIGGKKKK.

Belongs to the universal ribosomal protein uS13 family. In terms of assembly, part of the 30S ribosomal subunit. Forms a loose heterodimer with protein S19. Forms two bridges to the 50S subunit in the 70S ribosome.

In terms of biological role, located at the top of the head of the 30S subunit, it contacts several helices of the 16S rRNA. In the 70S ribosome it contacts the 23S rRNA (bridge B1a) and protein L5 of the 50S subunit (bridge B1b), connecting the 2 subunits; these bridges are implicated in subunit movement. Contacts the tRNAs in the A and P-sites. The protein is Small ribosomal subunit protein uS13 of Clostridium botulinum (strain Kyoto / Type A2).